Consider the following 240-residue polypeptide: Transcriptional regulatory protein BaeR (240 aa).

In terms of domain architecture, Response regulatory spans 12–125; sequence RILIVEDEPK…EVVARVKTIL (114 aa). The residue at position 61 (Asp-61) is a 4-aspartylphosphate. A DNA-binding region (ompR/PhoB-type) is located at residues 131-234; the sequence is QRELQQQDAE…VYGVGYRWEA (104 aa).

Phosphorylated by BaeS.

It is found in the cytoplasm. Functionally, member of the two-component regulatory system BaeS/BaeR. Activates the mdtABCD operon. The protein is Transcriptional regulatory protein BaeR (baeR) of Escherichia coli O6:H1 (strain CFT073 / ATCC 700928 / UPEC).